Reading from the N-terminus, the 312-residue chain is Ribonuclease Z (312 aa).

7 residues coordinate Zn(2+): H62, H64, D66, H67, H144, D215, and H273. The Proton acceptor role is filled by D66.

The protein belongs to the RNase Z family. Homodimer. Requires Zn(2+) as cofactor.

It carries out the reaction Endonucleolytic cleavage of RNA, removing extra 3' nucleotides from tRNA precursor, generating 3' termini of tRNAs. A 3'-hydroxy group is left at the tRNA terminus and a 5'-phosphoryl group is left at the trailer molecule.. Its function is as follows. Zinc phosphodiesterase, which displays some tRNA 3'-processing endonuclease activity. Probably involved in tRNA maturation, by removing a 3'-trailer from precursor tRNA. The chain is Ribonuclease Z from Prochlorococcus marinus (strain AS9601).